The chain runs to 262 residues: Hydroxyethylthiazole kinase (262 aa).

M50 serves as a coordination point for substrate. ATP contacts are provided by R125 and T171. G198 lines the substrate pocket.

It belongs to the Thz kinase family. It depends on Mg(2+) as a cofactor.

The catalysed reaction is 5-(2-hydroxyethyl)-4-methylthiazole + ATP = 4-methyl-5-(2-phosphooxyethyl)-thiazole + ADP + H(+). It participates in cofactor biosynthesis; thiamine diphosphate biosynthesis; 4-methyl-5-(2-phosphoethyl)-thiazole from 5-(2-hydroxyethyl)-4-methylthiazole: step 1/1. In terms of biological role, catalyzes the phosphorylation of the hydroxyl group of 4-methyl-5-beta-hydroxyethylthiazole (THZ). The sequence is that of Hydroxyethylthiazole kinase from Escherichia coli O6:K15:H31 (strain 536 / UPEC).